Reading from the N-terminus, the 86-residue chain is Large ribosomal subunit protein bL31B (86 aa).

It belongs to the bacterial ribosomal protein bL31 family. Type B subfamily. Part of the 50S ribosomal subunit.

The chain is Large ribosomal subunit protein bL31B from Cupriavidus metallidurans (strain ATCC 43123 / DSM 2839 / NBRC 102507 / CH34) (Ralstonia metallidurans).